Reading from the N-terminus, the 194-residue chain is 7-methyl-GTP pyrophosphatase (194 aa).

Asp-70 (proton acceptor) is an active-site residue.

It belongs to the Maf family. YceF subfamily. A divalent metal cation serves as cofactor.

Its subcellular location is the cytoplasm. It carries out the reaction N(7)-methyl-GTP + H2O = N(7)-methyl-GMP + diphosphate + H(+). Nucleoside triphosphate pyrophosphatase that hydrolyzes 7-methyl-GTP (m(7)GTP). May have a dual role in cell division arrest and in preventing the incorporation of modified nucleotides into cellular nucleic acids. The polypeptide is 7-methyl-GTP pyrophosphatase (Vibrio vulnificus (strain CMCP6)).